The primary structure comprises 767 residues: Start control protein cdc10 (767 aa).

The tract at residues 17–44 is disordered; that stretch reads FSYQKRPEDEPSQPLSNRNINKLNDSST. Residues 29 to 44 show a composition bias toward polar residues; the sequence is QPLSNRNINKLNDSST. An HTH APSES-type domain is found at 66 to 173; that stretch reads ELYAVECSGM…FNLDLFPKFS (108 aa). The segment at residues 98 to 119 is a DNA-binding region (H-T-H motif); the sequence is ISQILRLAGTSSSENAKELDDI. Residues 189–230 form a disordered region; it reads TSSFNTRSPLRNHNFSNPSKSSKNGVHTINNMQSSPSPSSSF. Residues 192-221 are compositionally biased toward polar residues; the sequence is FNTRSPLRNHNFSNPSKSSKNGVHTINNMQ. Ser252 bears the Phosphoserine mark. The Nuclear localization signal signature appears at 261–264; sequence KRHR. ANK repeat units follow at residues 356-385 and 483-512; these read LGHA…NPLR and NGDT…SAYI. The tract at residues 542–562 is disordered; that stretch reads VSLMSENLSSKEKTAVPPRQK.

DSC1 contains cdc10 and sct1/res1. Interacts with pol5.

Its subcellular location is the nucleus. Its function is as follows. Major component of the cell cycle transcription factor complex MBF (MCB binding factor, also known as DSC1), that controls G1-S phase specific gene expression. Involved in the control of rRNA production, via interaction with pol5. May be involved in the transcriptional regulation of the cdc22 and cdt1 genes. In fission yeast, two genes, cdc10 and cdc2, are required for the cell cycle control called start, the point early in the G1 phase at which cells become committed to the mitotic cycle. The sequence is that of Start control protein cdc10 (cdc10) from Schizosaccharomyces pombe (strain 972 / ATCC 24843) (Fission yeast).